The sequence spans 322 residues: Probable cAMP-dependent protein kinase catalytic subunit (322 aa).

Residues 7 to 261 (FEFVKVVGVG…ICEIMGHPFF (255 aa)) form the Protein kinase domain. Residues 13–21 (VGVGAFGKV) and lysine 37 each bind ATP. Residue aspartate 132 is the Proton acceptor of the active site. In terms of domain architecture, AGC-kinase C-terminal spans 262 to 322 (KGIDWHEVES…KHLYKVSKGL (61 aa)).

The protein belongs to the protein kinase superfamily. AGC Ser/Thr protein kinase family. cAMP subfamily.

It carries out the reaction L-seryl-[protein] + ATP = O-phospho-L-seryl-[protein] + ADP + H(+). The catalysed reaction is L-threonyl-[protein] + ATP = O-phospho-L-threonyl-[protein] + ADP + H(+). The polypeptide is Probable cAMP-dependent protein kinase catalytic subunit (Encephalitozoon cuniculi (strain GB-M1) (Microsporidian parasite)).